The chain runs to 895 residues: Pentatricopeptide repeat-containing protein At1g74600, chloroplastic (895 aa).

The N-terminal 71 residues, 1–71, are a transit peptide targeting the chloroplast; it reads MNCLANESLN…CNLRTTKILQ (71 aa). 22 PPR repeats span residues 83–113, 114–148, 149–183, 184–214, 215–249, 250–280, 284–314, 315–349, 350–384, 385–415, 417–451, 452–483, 484–514, 515–549, 550–584, 585–615, 616–650, 651–685, 686–716, 717–751, 752–787, and 788–818; these read DVFLTKSLLSWYSNSGSMADAAKLFDTIPQP, DVVSCNIMISGYKQHRLFEESLRFFSKMHFLGFEA, NEISYGSVISACSALQAPLFSELVCCHTIKMGYFF, YEVVESALIDVFSKNLRFEDAYKVFRDSLSA, NVYCWNTIIAGALRNQNYGAVFDLFHEMCVGFQKP, DSYTYSSVLAACASLEKLRFGKVVQARVIKC, DVFVCTAIVDLYAKCGHMAEAMEVFSRIPNP, SVVSWTVMLSGYTKSNDAFSALEIFKEMRHSGVEI, NNCTVTSVISACGRPSMVCEASQVHAWVFKSGFYL, DSSVAAALISMYSKSGDIDLSEQVFEDLDDI, RQNIVNVMITSFSQSKKPGKAIRLFTRMLQEGLRT, DEFSVCSLLSVLDCLNLGKQVHGYTLKSGLVL, DLTVGSSLFTLYSKCGSLEESYKLFQGIPFK, DNACWASMISGFNEYGYLREAIGLFSEMLDDGTSP, DESTLAAVLTVCSSHPSLPRGKEIHGYTLRAGIDK, GMDLGSALVNMYSKCGSLKLARQVYDRLPEL, DPVSCSSLISGYSQHGLIQDGFLLFRDMVMSGFTM, DSFAISSILKAAALSDESSLGAQVHAYITKIGLCT, EPSVGSSLLTMYSKFGSIDDCCKAFSQINGP, DLIAWTALIASYAQHGKANEALQVYNLMKEKGFKP, DKVTFVGVLSACSHGGLVEESYFHLNSMVKDYGIEP, and ENRHYVCMVDALGRSGRLREAESFINNMHIK. Residues 824–895 are type E motif; degenerate; that stretch reads WGTLLAACKI…VQKEPGWSSV (72 aa).

The protein belongs to the PPR family. PCMP-E subfamily.

The protein localises to the plastid. It is found in the chloroplast. In Arabidopsis thaliana (Mouse-ear cress), this protein is Pentatricopeptide repeat-containing protein At1g74600, chloroplastic (PCMP-E69).